An 82-amino-acid chain; its full sequence is MKAMKQRIAKFSPVASFRNLCIAGSVTAATSLPAFAGVIDTSAVESAITDGQGDMKAIGGYIVGALVILAVAGLIYSMLRKA.

The N-terminal stretch at Met-1–Ala-28 is a signal peptide. Residues Ala-29 to Ala-57 are Periplasmic-facing. The helical transmembrane segment at Ile-58–Met-78 threads the bilayer. The Cytoplasmic portion of the chain corresponds to Leu-79–Ala-82.

Belongs to the inovirus capsid protein family. In terms of assembly, homomultimerizes. There are several thousands of this protein in the phage capsid.

It localises to the virion. The protein localises to the host membrane. In terms of biological role, self assembles to form a helical capsid wrapping up the viral genomic DNA. The capsid displays a filamentous structure with a length of 760-1950 nm and a width of 6-8 nm. The virion assembly and budding take place at the host inner membrane. In Pseudomonas phage Pf1 (Bacteriophage Pf1), this protein is Capsid protein G8P (VIII).